A 199-amino-acid polypeptide reads, in one-letter code: Putative lectin L633 (199 aa).

A signal peptide spans 1–25 (MNILLLLMLLTSIILLVILIFLAYN). Residues 35–48 (CITPAPESQSISPD) show a composition bias toward polar residues. The segment at 35 to 74 (CITPAPESQSISPDQTTQLQTTTPVTSTPSNPTPTTIIPN) is disordered. A compositionally biased stretch (low complexity) spans 49–73 (QTTQLQTTTPVTSTPSNPTPTTIIP). A Bulb-type lectin domain is found at 84–195 (EIVSNGDNVL…LGQELWCATR (112 aa)). Asn121 carries an N-linked (GlcNAc...) asparagine; by host glycan.

Its subcellular location is the secreted. This chain is Putative lectin L633, found in Acanthamoeba polyphaga (Amoeba).